A 470-amino-acid polypeptide reads, in one-letter code: 4-O-methyltransferase 1 (470 aa).

Residues 274-275 (GG), D297, 328-329 (DC), and K344 contribute to the S-adenosyl-L-methionine site. H348 acts as the Proton acceptor in catalysis.

Belongs to the class I-like SAM-binding methyltransferase superfamily. Cation-independent O-methyltransferase family. COMT subfamily.

Functionally, S-adenosyl-L-methionine-dependent methyltransferase that preferentially catalyzes the methylation of 4-OH phenolic compounds like coniferyl alcohol, vanillyl alcohol and ferrulic acid. May play a role in promoting lignin degradation by methylating and inactivating free-hydroxyl phenolic compounds, products of lignin cleavage which are known inhibitors of lignin peroxidases. The chain is 4-O-methyltransferase 1 from Phanerochaete chrysosporium (strain RP-78 / ATCC MYA-4764 / FGSC 9002) (White-rot fungus).